We begin with the raw amino-acid sequence, 593 residues long: Translation initiation factor IF-2 (593 aa).

Residues 101 to 270 enclose the tr-type G domain; sequence LRPPVVTIMG…LLIAELEDLR (170 aa). The tract at residues 110-117 is G1; it reads GHVDHGKT. 110-117 is a binding site for GTP; that stretch reads GHVDHGKT. Residues 135-139 are G2; sequence GITQH. Residues 156–159 form a G3 region; the sequence is DTPG. Residues 156-160 and 210-213 contribute to the GTP site; these read DTPGH and NKMD. The G4 stretch occupies residues 210 to 213; sequence NKMD. Residues 246–248 form a G5 region; sequence SAR.

This sequence belongs to the TRAFAC class translation factor GTPase superfamily. Classic translation factor GTPase family. IF-2 subfamily.

Its subcellular location is the cytoplasm. Its function is as follows. One of the essential components for the initiation of protein synthesis. Protects formylmethionyl-tRNA from spontaneous hydrolysis and promotes its binding to the 30S ribosomal subunits. Also involved in the hydrolysis of GTP during the formation of the 70S ribosomal complex. This chain is Translation initiation factor IF-2, found in Dehalococcoides mccartyi (strain CBDB1).